Consider the following 105-residue polypeptide: Biogenesis of lysosome-related organelles complex 1 subunit SNN1 (105 aa).

Positions 70 to 105 form a coiled coil; that stretch reads WKDDNERLDSLRKRVDSLKSRFQSLKLRSDKLEQRE.

The protein belongs to the SNAPIN family. Component of the biogenesis of lysosome-related organelles complex-1 (BLOC-1).

The protein resides in the endosome. Functionally, component of the biogenesis of lysosome-related organelles complex-1 (BLOC-1), a complex involved in endosomal cargo sorting. The sequence is that of Biogenesis of lysosome-related organelles complex 1 subunit SNN1 (SNN1) from Zygosaccharomyces rouxii (strain ATCC 2623 / CBS 732 / NBRC 1130 / NCYC 568 / NRRL Y-229).